Reading from the N-terminus, the 3010-residue chain is Genome polyprotein (3010 aa).

An N-acetylserine; by host modification is found at serine 2. The tract at residues 2-23 is interaction with STAT1; that stretch reads STNPKPQRKTKRNTNRRPQDVK. Positions 2-58 are interaction with EIF2AK2/PKR; it reads STNPKPQRKTKRNTNRRPQDVKFPGGGQIVGGVYLLPRRGPRLGVRAPRKTSERSQP. An interaction with DDX3X region spans residues 2–59; it reads STNPKPQRKTKRNTNRRPQDVKFPGGGQIVGGVYLLPRRGPRLGVRAPRKTSERSQPR. Residues 2-75 form a disordered region; the sequence is STNPKPQRKT…PKARRPEGRT (74 aa). Short sequence motifs (nuclear localization signal) lie at residues 5-13 and 38-43; these read PKPQRKTKR and PRRGPR. Residues 7 to 16 are compositionally biased toward basic residues; it reads PQRKTKRNTN. The span at 32–47 shows a compositional bias: low complexity; the sequence is GGVYLLPRRGPRLGVR. Serine 53 carries the post-translational modification Phosphoserine; by host. 2 consecutive short sequence motifs (nuclear localization signal) follow at residues 58 to 64 and 66 to 71; these read PRGRRQP and PKARRP. Positions 58–68 are enriched in basic residues; that stretch reads PRGRRQPIPKA. Phosphoserine; by host is present on serine 99. Residues 112–152 form an important for endoplasmic reticulum and mitochondrial localization region; sequence PRRRSRNLGKVIDTLTCGFADLMGYIPLVGAPLGGAARALA. At serine 116 the chain carries Phosphoserine; by host PKA. The segment at 122–173 is interaction with APOA2; that stretch reads VIDTLTCGFADLMGYIPLVGAPLGGAARALAHGVRVLEDGVNYATGNLPGCS. An important for lipid droplets localization region spans residues 164 to 167; the sequence is YATG. The propeptide at 178–191 is ER anchor for the core protein, removed in mature form by host signal peptidase; the sequence is LLALLSCLTTPASA. Residues 190 to 358 lie on the Lumenal side of the membrane; the sequence is SAYEVHNVSG…AGAHWGVLAG (169 aa). Residues asparagine 196, asparagine 209, asparagine 234, and asparagine 250 are each glycosylated (N-linked (GlcNAc...) asparagine; by host). The tract at residues 265–296 is important for fusion; it reads LVGAAAFCSAMYVGDLCGSVFLVSQLFTFSPR. An N-linked (GlcNAc...) asparagine; by host glycan is attached at asparagine 305. A helical membrane pass occupies residues 359-379; sequence LAYYSMAGNWAKVLIVMLLFA. The Lumenal portion of the chain corresponds to 380-725; the sequence is GVDGDTHVTG…WEYVLLLFLL (346 aa). Residues 385–411 are HVR1; the sequence is THVTGGAQAKTTNRLVSMFASGPSQKI. Asparagine 417 is a glycosylation site (N-linked (GlcNAc...) asparagine; by host). N-linked (GlcNAc...) (high mannose) asparagine; by host glycosylation is found at asparagine 423, asparagine 430, and asparagine 448. Disulfide bonds link cysteine 429-cysteine 552, cysteine 452-cysteine 459, cysteine 486-cysteine 494, and cysteine 503-cysteine 508. Residues 474–482 form an HVR2 region; it reads YAESSRSDQ. The tract at residues 480–494 is CD81-binding 1; sequence SDQRPYCWHYPPPQC. Residues asparagine 532 and asparagine 540 are each glycosylated (N-linked (GlcNAc...) (high mannose) asparagine; by host). The segment at 544–552 is CD81-binding 2; that stretch reads PPQGNWFGC. A glycan (N-linked (GlcNAc...) (high mannose) asparagine; by host) is linked at asparagine 556. Cysteine 564 and cysteine 569 are oxidised to a cystine. Asparagine 576 carries an N-linked (GlcNAc...) (high mannose) asparagine; by host glycan. 3 disulfide bridges follow: cysteine 581/cysteine 585, cysteine 597/cysteine 620, and cysteine 607/cysteine 644. N-linked (GlcNAc...) (high mannose) asparagine; by host glycans are attached at residues asparagine 623 and asparagine 645. A disulfide bridge connects residues cysteine 652 and cysteine 677. Positions 660–671 are EIF2AK2/eIF2-alpha phosphorylation homology domain (PePHD); that stretch reads PELSPLLLSTTE. Residues 726–746 form a helical membrane-spanning segment; it reads LADARVCACLWMMLLIAQAEA. The Lumenal portion of the chain corresponds to 747–757; it reads ALENLVVLNSA. The chain crosses the membrane as a helical span at residues 758–778; the sequence is SVAGAHGILSFLVFFCAAWYI. Topologically, residues 779 to 781 are cytoplasmic; that stretch reads KGR. The chain crosses the membrane as a helical span at residues 782–803; sequence LVPGATYALYGVWPLLLLLLAL. The Lumenal portion of the chain corresponds to 804–813; that stretch reads PPRAYAMDRE. The chain crosses the membrane as a helical span at residues 814–834; that stretch reads MAASCGGAVFVGLVLLTLSPY. Residues 835–838 are Cytoplasmic-facing; sequence YKVF. A helical transmembrane segment spans residues 839–859; the sequence is LARLIWWLQYFTTRAEADLHV. The Lumenal segment spans residues 860–881; the sequence is WIPPLNARGGRDAIILLMCAVH. A helical transmembrane segment spans residues 882-902; that stretch reads PELIFDITKLLIAILGPLMVL. In terms of domain architecture, Peptidase C18 spans 903 to 1026; it reads QAGITRVPYF…SLEGRGLRLL (124 aa). Residues 903-1657 are Cytoplasmic-facing; sequence QAGITRVPYF…CMSADLEVVT (755 aa). Residues 904–1206 are protease NS2-3; the sequence is AGITRVPYFV…PVESMETTMR (303 aa). A lipid anchor (S-palmitoyl cysteine; by host) is attached at cysteine 922. Positions 929 to 949 are interaction with host SCPS1; the sequence is AGGHYVQMAFMKLGALTGTYI. Active-site for protease NS2 activity; shared with dimeric partner residues include histidine 952, glutamate 972, and cysteine 993. The Peptidase S29 domain maps to 1027 to 1208; sequence APITAYSQQT…ESMETTMRSP (182 aa). Catalysis depends on charge relay system; for serine protease NS3 activity residues histidine 1083 and aspartate 1107. Residues cysteine 1123 and cysteine 1125 each coordinate Zn(2+). Serine 1165 functions as the Charge relay system; for serine protease NS3 activity in the catalytic mechanism. Zn(2+) contacts are provided by cysteine 1171 and histidine 1175. Positions 1217 to 1369 constitute a Helicase ATP-binding domain; it reads PAVPQSFQVA…PNIEEVALSN (153 aa). 1230 to 1237 is an ATP binding site; that stretch reads APTGSGKS. Serine 1237 and glutamate 1317 together coordinate Mg(2+). The DECH box motif lies at 1316-1319; it reads DECH. The interval 1486-1497 is RNA-binding; that stretch reads QRRGRTGRGRRG. A helical membrane pass occupies residues 1658-1678; it reads STWVLVGGVLAALAAYCLTTG. The NS3-binding stretch occupies residues 1679–1690; sequence SVVIVGRIILSG. Over 1679 to 1805 the chain is Cytoplasmic; the sequence is SVVIVGRIIL…SITSPLTTQS (127 aa). A helical membrane pass occupies residues 1806-1826; the sequence is TLLFNILGGWVAAQLAPPSAA. Residues 1827–1828 are Lumenal-facing; that stretch reads SA. The chain crosses the membrane as a helical span at residues 1829 to 1849; that stretch reads FVGAGIAGAAVGSIGLGKVLV. Residues 1833-1861 are glycine zipper; sequence GIAGAAVGSIGLGKVLVDILAGYGAGVAG. Aspartate 1850 is a topological domain (cytoplasmic). The chain crosses the membrane as a helical span at residues 1851–1871; the sequence is ILAGYGAGVAGALVAFKVMSG. Topologically, residues 1872–1881 are lumenal; the sequence is EMPSTEDLVN. A helical membrane pass occupies residues 1882 to 1902; that stretch reads LLPAILSPGALVVGVVCAAIL. Residues 1903-1972 are Cytoplasmic-facing; sequence RRHVGPGEGA…WINEDCSTPC (70 aa). 2 S-palmitoyl cysteine; by host lipidation sites follow: cysteine 1968 and cysteine 1972. An intramembrane segment occupies 1973–2003; sequence SGSWLRDVWDWICTVLTDFKTWLQSKLLPQL. The interval 1978–1998 is membrane-binding; the sequence is RDVWDWICTVLTDFKTWLQSK. The Cytoplasmic portion of the chain corresponds to 2004–2989; the sequence is PGVPFFSCQR…YHSLSRARPR (986 aa). The segment at 2005–2221 is RNA-binding; that stretch reads GVPFFSCQRG…KATCTTHHVS (217 aa). Zn(2+) contacts are provided by cysteine 2011, cysteine 2029, cysteine 2031, and cysteine 2052. An FKBP8-binding region spans residues 2120-2208; it reads EFFSEVDGVR…ASSSASQLSA (89 aa). The transcriptional activation stretch occupies residues 2120–2332; that stretch reads EFFSEVDGVR…PIPPPRRKRT (213 aa). Residues 2135 to 2139 form an interaction with non-structural protein 4A region; that stretch reads PACRP. The tract at residues 2189–2441 is interaction with host SKP2; sequence RLARGSPPSL…PCAAEESKLP (253 aa). Serine 2194 carries the phosphoserine; by host; in p56 modification. Serine 2197, serine 2201, serine 2204, serine 2207, and serine 2210 each carry phosphoserine; by host; in p58. The ISDR stretch occupies residues 2210–2249; sequence SLKATCTTHHVSPDADLIEANLLWRQEMGGNITRVESENK. Residues 2210-2275 form an EIF2AK2/PKR-binding region; it reads SLKATCTTHH…REVSVPAEIL (66 aa). Positions 2249-2306 are NS4B-binding; sequence KVVVLDSFDPLRAEEDEREVSVPAEILRKSKKFPAAMPIWARPDYNPPLLESWKDPDY. The SH3-binding motif lies at 2322–2325; that stretch reads PPIP. The short motif at 2326–2334 is the Nuclear localization signal element; the sequence is PPRRKRTVV. Residues 2332 to 2441 are interaction with host IFI27; the sequence is TVVLTESSVS…PCAAEESKLP (110 aa). A Glycyl lysine isopeptide (Lys-Gly) (interchain with G-Cter in ubiquitin) cross-link involves residue lysine 2350. Positions 2351–2365 are enriched in polar residues; the sequence is TFGSSESSAVDSGTA. Residues 2351-2407 are disordered; the sequence is TFGSSESSAVDSGTATALPDQASDDGDKGSDVESYSSMPPLEGEPGDPDLSDGSWST. A V3 region spans residues 2354 to 2377; sequence SSESSAVDSGTATALPDQASDDGD. Serine 2448 and serine 2461 each carry phosphoserine; by host. The region spanning 2633–2751 is the RdRp catalytic domain; that stretch reads PMGFSYDTRC…ICESAGTQED (119 aa). Aspartate 2639, aspartate 2737, and aspartate 2738 together coordinate Mg(2+). Residues 2990–3010 traverse the membrane as a helical segment; sequence WFMLCLLLLSVGVGIYLLPNR.

This sequence belongs to the hepacivirus polyprotein family. Homooligomer. Interacts with E1 (via C-terminus). Interacts with the non-structural protein 5A. Interacts (via N-terminus) with host STAT1 (via SH2 domain); this interaction results in decreased STAT1 phosphorylation and ubiquitin-mediated proteasome-dependent STAT1 degradation, leading to decreased IFN-stimulated gene transcription. Interacts with host STAT3; this interaction constitutively activates STAT3. Associates with host LTBR receptor. Interacts with host TNFRSF1A receptor and possibly induces apoptosis. Interacts with host HNRPK. Interacts with host YWHAE. Interacts with host UBE3A/E6AP. Interacts with host DDX3X. Interacts with host APOA2. Interacts with host RXRA protein. Interacts with host SP110 isoform 3/Sp110b; this interaction sequesters the transcriptional corepressor SP110 away from the nucleus. Interacts with host CREB3 nuclear transcription protein; this interaction triggers cell transformation. Interacts with host ACY3. Interacts with host C1QR1. Interacts with host RBM24; this interaction, which enhances the interaction of the mature core protein with 5'-UTR, may inhibit viral translation and favor replication. Interacts (via N-terminus) with host EIF2AK2/PKR (via N-terminus); this interaction induces the autophosphorylation of EIF2AK2. Part of the viral assembly initiation complex composed of NS2, E1, E2, NS3, NS4A, NS5A and the mature core protein. As to quaternary structure, forms a heterodimer with envelope glycoprotein E2. Interacts with mature core protein. Interacts with protease NS2. The heterodimer E1/E2 interacts with host CLDN1; this interaction plays a role in viral entry into host cell. Interacts with host SPSB2 (via C-terminus). Part of the viral assembly initiation complex composed of NS2, E1, E2, NS3, NS4A, NS5A and the mature core protein. Interacts with host NEURL3; this interaction prevents E1 binding to glycoprotein E2. In terms of assembly, forms a heterodimer with envelope glycoprotein E1. Interacts with host CD81 and SCARB1 receptors; these interactions play a role in viral entry into host cell. Interacts with host EIF2AK2/PKR; this interaction inhibits EIF2AK2 and probably allows the virus to evade the innate immune response. Interacts with host CD209/DC-SIGN and CLEC4M/DC-SIGNR. Interact with host SPCS1; this interaction is essential for viral particle assembly. Interacts with protease NS2. The heterodimer E1/E2 interacts with host CLDN1; this interaction plays a role in viral entry into host cell. Part of the viral assembly initiation complex composed of NS2, E1, E2, NS3, NS4A, NS5A and the mature core protein. Interacts with host SLC3A2/4F2hc; the interaction may facilitate viral entry into host cell. Interacts with human PLSCR1. Homohexamer. Homoheptamer. Interacts with protease NS2. As to quaternary structure, homodimer. Interacts with host SPCS1; this interaction is essential for viral particle assembly. Interacts with envelope glycoprotein E1. Interacts with envelope glycoprotein E2. Interacts with viroporin p7. Interacts with serine protease/helicase NS3. Part of the replication complex composed of NS2, NS3, NS4A, NS4B, NS5A and the RNA-directed RNA polymerase embedded in an ER-derived membranous web. Part of the viral assembly initiation complex composed of NS2, E1, E2, NS3, NS4A, NS5A and the mature core protein. In terms of assembly, interacts with protease NS2. Interacts with non-structural protein 4A; this interaction stabilizes the folding of NS3 serine protease. NS3-NS4A interaction is essential for NS3 activation and allows membrane anchorage of the latter. NS3/NS4A complex also prevents phosphorylation of host IRF3, thus preventing the establishment of dsRNA induced antiviral state. Interacts with host MAVS; this interaction leads to the cleavage and inhibition of host MAVS. Interacts with host TICAM1; this interaction leads to the cleavage and inhibition of host TICAM1. Interacts with host TANK-binding kinase/TBK1; this interaction results in the inhibition of the association between TBK1 and IRF3, which leads to the inhibition of IRF3 activation. Interacts with host RBM24. Part of the replication complex composed of NS2, NS3, NS4A, NS4B, NS5A and the RNA-directed RNA polymerase embedded in an ER-derived membranous web. Part of the viral assembly initiation complex composed of NS2, E1, E2, NS3, NS4A, NS5A and the mature core protein. Interacts with NS3 serine protease; this interaction stabilizes the folding of NS3 serine protease. NS3-NS4A interaction is essential for NS3 activation and allows membrane anchorage of the latter. Interacts with non-structural protein 5A (via N-terminus). Part of the replication complex composed of NS2, NS3, NS4A, NS4B, NS5A and the RNA-directed RNA polymerase embedded in an ER-derived membranous web. Part of the viral assembly initiation complex composed of NS2, E1, E2, NS3, NS4A, NS5A and the mature core protein. As to quaternary structure, monomer. Homodimer; dimerization is required for RNA-binding. Interacts with the mature core protein. Interacts (via N-terminus) with non-structural protein 4A. Interacts with non-structural protein 4B. Interacts with RNA-directed RNA polymerase. Part of the viral assembly initiation complex composed of NS2, E1, E2, NS3, NS4A, NS5A and the mature core protein. Part of the replication complex composed of NS2, NS3, NS4A, NS4B, NS5A and the RNA-directed RNA polymerase embedded in an ER-derived membranous web. Interacts with host GRB2. Interacts with host BIN1. Interacts with host PIK3R1. Interacts with host SRCAP. Interacts with host FKBP8. Interacts with host VAPB. Interacts with host EIF2AK2/PKR; this interaction leads to disruption of EIF2AK2 dimerization by NS5A and probably allows the virus to evade the innate immune response. Interacts (via N-terminus) with host PACSIN2 (via N-terminus); this interaction attenuates protein kinase C alpha-mediated phosphorylation of PACSIN2 by disrupting the interaction between PACSIN2 and PRKCA. Interacts (via N-terminus) with host SRC kinase (via SH2 domain). Interacts with most Src-family kinases. Interacts with host IFI27 and SKP2; promotes the ubiquitin-mediated proteasomal degradation of NS5A. Interacts with host GPS2. Interacts with host TNFRSF21; this interaction allows the modulation by the virus of JNK, p38 MAPK, STAT3, and Akt signaling pathways in a DR6-dependent manner. Interacts (via N-terminus) with host CIDEB (via N-terminus); this interaction seems to regulate the association of HCV particles with APOE. Interacts with host CHKA/Choline Kinase-alpha; CHKA bridges host PI4KA and NS5A and potentiates NS5A-stimulated PI4KA activity, which then facilitates the targeting of the ternary complex to the ER for viral replication. Interacts with host SPSB2 (via C-terminus); this interaction targets NS5A for ubiquitination and degradation. Interacts with host RAB18; this interaction may promote the association of NS5A and other replicase components with lipid droplets. Interacts (via region D2) with host PPIA/CYPA; the interaction stimulates RNA-binding ability of NS5A and is dependent on the peptidyl-prolyl cis-trans isomerase activity of PPIA/CYPA. Interacts with host TRIM14; this interaction induces the degradation of NS5A. In terms of assembly, homooligomer. Interacts with non-structural protein 5A. Interacts with host VAPB. Interacts with host PRK2/PKN2. Interacts with host HNRNPA1 and SEPT6; these interactions facilitate the viral replication. Part of the replication complex composed of NS2, NS3, NS4A, NS4B, NS5A and the RNA-directed RNA polymerase embedded in an ER-derived membranous web. Zn(2+) serves as cofactor. It depends on Mg(2+) as a cofactor. Specific enzymatic cleavages in vivo yield mature proteins. The structural proteins, core, E1, E2 and p7 are produced by proteolytic processing by host signal peptidases. The core protein precursor is synthesized as a 23 kDa, which is retained in the ER membrane through the hydrophobic signal peptide. Cleavage by the signal peptidase releases the 21 kDa mature core protein. The cleavage of the core protein precursor occurs between aminoacids 176 and 188 but the exact cleavage site is not known. Some degraded forms of the core protein appear as well during the course of infection. The other proteins (p7, NS2, NS3, NS4A, NS4B, NS5A and NS5B) are cleaved by the viral proteases. Autoprocessing between NS2 and NS3 is mediated by the NS2 cysteine protease catalytic domain and regulated by the NS3 N-terminal domain. Post-translationally, phosphorylated by host PKC and PKA. In terms of processing, ubiquitinated; mediated by UBE3A and leading to core protein subsequent proteasomal degradation. Highly N-glycosylated. Post-translationally, palmitoylation is required for NS2/3 autoprocessing and E2 recruitment to membranes. In terms of processing, palmitoylated. This modification may play a role in its polymerization or in protein-protein interactions. Phosphorylated on serines in a basal form termed p56. p58 is a hyperphosphorylated form of p56. p56 and p58 coexist in the cell in roughly equivalent amounts. Hyperphosphorylation is dependent on the presence of NS4A. Host CSNK1A1/CKI-alpha or RPS6KB1 kinases may be responsible for NS5A phosphorylation. Post-translationally, tyrosine phosphorylation is essential for the interaction with host SRC. In terms of processing, the N-terminus is phosphorylated by host PRK2/PKN2.

It localises to the host endoplasmic reticulum membrane. It is found in the host mitochondrion membrane. The protein localises to the virion. The protein resides in the host cytoplasm. Its subcellular location is the host nucleus. It localises to the host lipid droplet. It is found in the virion membrane. The protein localises to the host mitochondrion. The protein resides in the host cell membrane. Its subcellular location is the host perinuclear region. It catalyses the reaction Hydrolysis of four peptide bonds in the viral precursor polyprotein, commonly with Asp or Glu in the P6 position, Cys or Thr in P1 and Ser or Ala in P1'.. The enzyme catalyses a ribonucleoside 5'-triphosphate + H2O = a ribonucleoside 5'-diphosphate + phosphate + H(+). It carries out the reaction ATP + H2O = ADP + phosphate + H(+). The catalysed reaction is RNA(n) + a ribonucleoside 5'-triphosphate = RNA(n+1) + diphosphate. With respect to regulation, inhibited by the antiviral drug hexamethylene amiloride. Inhibition by amantadine appears to be genotype-dependent. Also inhibited by long-alkyl-chain iminosugar derivatives. Activity is up-regulated by PRK2/PKN2-mediated phosphorylation. Its activity is regulated as follows. Activity of auto-protease NS2 is dependent on zinc ions and completely inhibited by EDTA, 1,10-phenanthroline, iodocetamide and N-ethylmaleimide. According to PubMed:9261354, completely inhibited by the serine protease inhibitors TLCK and TPCK. According to PubMed:8189501, almost completely inhibited by TPCK and slightly inhibited by TLCK. Not inhibited by antipain, aprotinin, E64, PMSF and pepstatin. Also inhibited by NS2 and NS4A derived peptides. Serine protease/helicase NS3 is also activated by zinc ions. Its function is as follows. Packages viral RNA to form a viral nucleocapsid, and promotes virion budding. Participates in the viral particle production as a result of its interaction with the non-structural protein 5A. Binds RNA and may function as a RNA chaperone to induce the RNA structural rearrangements taking place during virus replication. Modulates viral translation initiation by interacting with viral IRES and 40S ribosomal subunit. Affects various cell signaling pathways, host immunity and lipid metabolism. Prevents the establishment of cellular antiviral state by blocking the interferon-alpha/beta (IFN-alpha/beta) and IFN-gamma signaling pathways and by blocking the formation of phosphorylated STAT1 and promoting ubiquitin-mediated proteasome-dependent degradation of STAT1. Activates STAT3 leading to cellular transformation. Regulates the activity of cellular genes, including c-myc and c-fos. May repress the promoter of p53, and sequester CREB3 and SP110 isoform 3/Sp110b in the cytoplasm. Represses cell cycle negative regulating factor CDKN1A, thereby interrupting an important check point of normal cell cycle regulation. Targets transcription factors involved in the regulation of inflammatory responses and in the immune response: suppresses NF-kappa-B activation, and activates AP-1. Binds to dendritic cells (DCs) via C1QR1, resulting in down-regulation of T-lymphocytes proliferation. Alters lipid metabolism by interacting with hepatocellular proteins involved in lipid accumulation and storage. Induces up-regulation of FAS promoter activity, and thereby contributes to the increased triglyceride accumulation in hepatocytes (steatosis). Forms a heterodimer with envelope glycoprotein E2, which mediates virus attachment to the host cell, virion internalization through clathrin-dependent endocytosis and fusion with host membrane. Fusion with the host cell is most likely mediated by both E1 and E2, through conformational rearrangements of the heterodimer required for fusion rather than a classical class II fusion mechanism. E1/E2 heterodimer binds host apolipoproteins such as APOB and APOE thereby forming a lipo-viro-particle (LVP). APOE associated to the LVP allows the initial virus attachment to cell surface receptors such as the heparan sulfate proteoglycans (HSPGs), syndecan-1 (SDC1), syndecan-1 (SDC2), the low-density lipoprotein receptor (LDLR) and scavenger receptor class B type I (SCARB1). The cholesterol transfer activity of SCARB1 allows E2 exposure and binding of E2 to SCARB1 and the tetraspanin CD81. E1/E2 heterodimer binding on CD81 activates the epithelial growth factor receptor (EGFR) signaling pathway. Diffusion of the complex E1-E2-EGFR-SCARB1-CD81 to the cell lateral membrane allows further interaction with Claudin 1 (CLDN1) and occludin (OCLN) to finally trigger HCV entry. Functionally, forms a heterodimer with envelope glycoprotein E1, which mediates virus attachment to the host cell, virion internalization through clathrin-dependent endocytosis and fusion with host membrane. Fusion with the host cell is most likely mediated by both E1 and E2, through conformational rearrangements of the heterodimer required for fusion rather than a classical class II fusion mechanism. The interaction between envelope glycoprotein E2 and host apolipoprotein E/APOE allows the proper assembly, maturation and infectivity of the viral particles. This interaction is probably promoted via the up-regulation of cellular autophagy by the virus. E1/E2 heterodimer binds host apolipoproteins such as APOB and APOE thereby forming a lipo-viro-particle (LVP). APOE associated to the LVP allows the initial virus attachment to cell surface receptors such as the heparan sulfate proteoglycans (HSPGs), syndecan-1 (SDC1), syndecan-1 (SDC2), the low-density lipoprotein receptor (LDLR) and scavenger receptor class B type I (SCARB1). The cholesterol transfer activity of SCARB1 allows E2 exposure and binding of E2 to SCARB1 and the tetraspanin CD81. E1/E2 heterodimer binding on CD81 activates the epithelial growth factor receptor (EGFR) signaling pathway. Diffusion of the complex E1-E2-EGFR-SCARB1-CD81 to the cell lateral membrane allows further interaction with Claudin 1 (CLDN1) and occludin (OCLN) to finally trigger HCV entry. Inhibits host EIF2AK2/PKR activation, preventing the establishment of an antiviral state. Viral ligand for CD209/DC-SIGN and CLEC4M/DC-SIGNR, which are respectively found on dendritic cells (DCs), and on liver sinusoidal endothelial cells and macrophage-like cells of lymph node sinuses. These interactions allow the capture of circulating HCV particles by these cells and subsequent facilitated transmission to permissive cells such as hepatocytes and lymphocyte subpopulations. The interaction between E2 and host amino acid transporter complex formed by SLC3A2 and SLC7A5/LAT1 may facilitate viral entry into host cell. In terms of biological role, ion channel protein that acts as a viroporin and plays an essential role in the assembly, envelopment and secretion of viral particles. Regulates the host cell secretory pathway, which induces the intracellular retention of viral glycoproteins and favors assembly of viral particles. Creates a pore in acidic organelles and releases Ca(2+) and H(+) in the cytoplasm of infected cells, leading to a productive viral infection. High levels of cytoplasmic Ca(2+) may trigger membrane trafficking and transport of viral ER-associated proteins to viroplasms, sites of viral genome replication. This ionic imbalance induces the assembly of the inflammasome complex, which triggers the maturation of pro-IL-1beta into IL-1beta through the action of caspase-1. Targets also host mitochondria and induces mitochondrial depolarization. In addition of its role as a viroporin, acts as a lipid raft adhesion factor. Its function is as follows. Cysteine protease required for the proteolytic auto-cleavage between the non-structural proteins NS2 and NS3. The N-terminus of NS3 is required for the function of NS2 protease (active region NS2-3). Promotes the initiation of viral particle assembly by mediating the interaction between structural and non-structural proteins. Displays three enzymatic activities: serine protease with a chymotrypsin-like fold, NTPase and RNA helicase. NS3 serine protease, in association with NS4A, is responsible for the cleavages of NS3-NS4A, NS4A-NS4B, NS4B-NS5A and NS5A-NS5B. The NS3/NS4A complex prevents phosphorylation of host IRF3, thus preventing the establishment of dsRNA induced antiviral state. The NS3/NS4A complex induces host amino acid transporter component SLC3A2, thus contributing to HCV propagation. NS3 RNA helicase binds to RNA and unwinds both dsDNA and dsRNA in the 3' to 5' direction, and likely resolves RNA complicated stable secondary structures in the template strand. Binds a single ATP and catalyzes the unzipping of a single base pair of dsRNA. Inhibits host antiviral proteins TBK1 and IRF3 thereby preventing the establishment of an antiviral state. Cleaves host MAVS/CARDIF thereby preventing the establishment of an antiviral state. Cleaves host TICAM1/TRIF, thereby disrupting TLR3 signaling and preventing the establishment of an antiviral state. Functionally, peptide cofactor which forms a non-covalent complex with the N-terminal of NS3 serine protease. The NS3/NS4A complex prevents phosphorylation of host IRF3, thus preventing the establishment of dsRNA induced antiviral state. The NS3/NS4A complex induces host amino acid transporter component SLC3A2, thus contributing to HCV propagation. In terms of biological role, induces a specific membrane alteration that serves as a scaffold for the virus replication complex. This membrane alteration gives rise to the so-called ER-derived membranous web that contains the replication complex. NS4B self-interaction contributes to its function in membranous web formation. Promotes host TRIF protein degradation in a CASP8-dependent manner thereby inhibiting host TLR3-mediated interferon signaling. Disrupts the interaction between STING and TBK1 contributing to the inhibition of interferon signaling. Its function is as follows. Phosphorylated protein that is indispensable for viral replication and assembly. Both hypo- and hyperphosphorylated states are required for the viral life cycle. The hyperphosphorylated form of NS5A is an inhibitor of viral replication. Involved in RNA-binding and especially in binding to the viral genome. Zinc is essential for RNA-binding. Participates in the viral particle production as a result of its interaction with the viral mature core protein. Its interaction with host VAPB may target the viral replication complex to vesicles. Down-regulates viral IRES translation initiation. Mediates interferon resistance, presumably by interacting with and inhibiting host EIF2AK2/PKR. Prevents BIN1-induced apoptosis. Acts as a transcriptional activator of some host genes important for viral replication when localized in the nucleus. Via the interaction with host PACSIN2, modulates lipid droplet formation in order to promote virion assembly. Modulates TNFRSF21/DR6 signaling pathway for viral propagation. RNA-dependent RNA polymerase that performs primer-template recognition and RNA synthesis during viral replication. Initiates RNA transcription/replication at a flavin adenine dinucleotide (FAD), resulting in a 5'- FAD cap on viral RNAs. In this way, recognition of viral 5' RNA by host pattern recognition receptors can be bypassed, thereby evading activation of antiviral pathways. This is Genome polyprotein from Hepatitis C virus genotype 1b (isolate BK) (HCV).